An 89-amino-acid polypeptide reads, in one-letter code: Small ribosomal subunit protein uS15 (89 aa).

This sequence belongs to the universal ribosomal protein uS15 family. Part of the 30S ribosomal subunit. Forms a bridge to the 50S subunit in the 70S ribosome, contacting the 23S rRNA.

One of the primary rRNA binding proteins, it binds directly to 16S rRNA where it helps nucleate assembly of the platform of the 30S subunit by binding and bridging several RNA helices of the 16S rRNA. Its function is as follows. Forms an intersubunit bridge (bridge B4) with the 23S rRNA of the 50S subunit in the ribosome. This is Small ribosomal subunit protein uS15 from Rhodococcus erythropolis (strain PR4 / NBRC 100887).